Consider the following 182-residue polypeptide: Pyruvate synthase subunit PorC (182 aa).

In terms of assembly, heterotetramer of one alpha, one beta, one delta and one gamma chain.

The catalysed reaction is 2 oxidized [2Fe-2S]-[ferredoxin] + pyruvate + CoA = 2 reduced [2Fe-2S]-[ferredoxin] + acetyl-CoA + CO2 + H(+). The protein is Pyruvate synthase subunit PorC (porC) of Methanosarcina barkeri (strain Fusaro / DSM 804).